Here is a 211-residue protein sequence, read N- to C-terminus: FMN-dependent NADH:quinone oxidoreductase 2 (211 aa).

102-105 (MWNF) provides a ligand contact to FMN.

Belongs to the azoreductase type 1 family. In terms of assembly, homodimer. FMN is required as a cofactor.

It catalyses the reaction 2 a quinone + NADH + H(+) = 2 a 1,4-benzosemiquinone + NAD(+). The catalysed reaction is N,N-dimethyl-1,4-phenylenediamine + anthranilate + 2 NAD(+) = 2-(4-dimethylaminophenyl)diazenylbenzoate + 2 NADH + 2 H(+). Functionally, quinone reductase that provides resistance to thiol-specific stress caused by electrophilic quinones. Its function is as follows. Also exhibits azoreductase activity. Catalyzes the reductive cleavage of the azo bond in aromatic azo compounds to the corresponding amines. This Bacillus cereus (strain ATCC 14579 / DSM 31 / CCUG 7414 / JCM 2152 / NBRC 15305 / NCIMB 9373 / NCTC 2599 / NRRL B-3711) protein is FMN-dependent NADH:quinone oxidoreductase 2.